The sequence spans 48 residues: Light-harvesting protein B-870 beta chain (48 aa).

Topologically, residues 2–21 (AERKGSISGLTDDEAQEFHK) are cytoplasmic. Positions 20 and 38 each coordinate a bacteriochlorophyll. A helical membrane pass occupies residues 22–44 (FWVQGFVGFTAVAVVAHFLVWVW). At 45–48 (RPWL) the chain is on the periplasmic side.

An alpha/beta heterodimer. The core complex is formed by different alpha and beta chains, binding bacteriochlorophyll molecules, and arranged most probably in tetrameric structures disposed around the reaction center. The non-pigmented gamma chains may constitute additional components.

The protein localises to the cell inner membrane. In terms of biological role, antenna complexes are light-harvesting systems, which transfer the excitation energy to the reaction centers. In Rubrivivax gelatinosus (Rhodocyclus gelatinosus), this protein is Light-harvesting protein B-870 beta chain (pufB).